A 436-amino-acid polypeptide reads, in one-letter code: UDP-N-acetylmuramate--L-alanine ligase (436 aa).

110–116 (GAHGKTS) is an ATP binding site.

This sequence belongs to the MurCDEF family.

The protein resides in the cytoplasm. The enzyme catalyses UDP-N-acetyl-alpha-D-muramate + L-alanine + ATP = UDP-N-acetyl-alpha-D-muramoyl-L-alanine + ADP + phosphate + H(+). It participates in cell wall biogenesis; peptidoglycan biosynthesis. Cell wall formation. The polypeptide is UDP-N-acetylmuramate--L-alanine ligase (Lacticaseibacillus casei (strain BL23) (Lactobacillus casei)).